A 737-amino-acid chain; its full sequence is Disintegrin and metalloproteinase domain-containing protein 2 (737 aa).

The N-terminal stretch at 1–18 is a signal peptide; it reads MWLLLLLLSGLSRLGGLS. Residues 19–180 constitute a propeptide that is removed on maturation; the sequence is EPQTEGTREK…YKIRSIKPQR (162 aa). Topologically, residues 19-688 are extracellular; it reads EPQTEGTREK…ASAYRSKSAR (670 aa). Asn128 and Asn226 each carry an N-linked (GlcNAc...) asparagine glycan. One can recognise a Peptidase M12B domain in the interval 184–381; the sequence is HYLEIHIVVE…QSSHCLQNQP (198 aa). 4 disulfides stabilise this stretch: Cys293-Cys376, Cys335-Cys360, Cys337-Cys342, and Cys450-Cys470. N-linked (GlcNAc...) asparagine glycans are attached at residues Asn359, Asn464, Asn491, and Asn571. Positions 389–478 constitute a Disintegrin domain; sequence MAVCGNGELE…VCEEDFFVQD (90 aa). Positions 617–650 constitute an EGF-like domain; that stretch reads LNYDCTPEKCNHHGVCNNKKHCHCEPTYLPPDCK. 3 cysteine pairs are disulfide-bonded: Cys621–Cys632, Cys626–Cys638, and Cys640–Cys649. A helical transmembrane segment spans residues 689–709; it reads WPFFLIIPFYVVILVLIGMLV. Residues 710–737 are Cytoplasmic-facing; it reads KVYSQRKKWRMDDFSSEEQFESESESKD. Ser731 carries the phosphoserine modification.

Heterodimer with ADAM1/fertilin subunit alpha. The prodomain and the metalloprotease domain are cleaved during the epididymal maturation of the spermatozoa.

It localises to the membrane. Sperm surface membrane protein that may be involved in sperm-egg plasma membrane adhesion and fusion during fertilization. Could have a direct role in sperm-zona binding or migration of sperm from the uterus into the oviduct. Interactions with egg membrane could be mediated via binding between its disintegrin-like domain to one or more integrins receptors on the egg. This is a non catalytic metalloprotease-like protein. The protein is Disintegrin and metalloproteinase domain-containing protein 2 (Adam2) of Rattus norvegicus (Rat).